We begin with the raw amino-acid sequence, 186 residues long: UPF0301 protein CV_3909 (186 aa).

Belongs to the UPF0301 (AlgH) family.

The polypeptide is UPF0301 protein CV_3909 (Chromobacterium violaceum (strain ATCC 12472 / DSM 30191 / JCM 1249 / CCUG 213 / NBRC 12614 / NCIMB 9131 / NCTC 9757 / MK)).